Here is an 84-residue protein sequence, read N- to C-terminus: Small ribosomal subunit protein uS17 (84 aa).

This sequence belongs to the universal ribosomal protein uS17 family. Part of the 30S ribosomal subunit.

Its function is as follows. One of the primary rRNA binding proteins, it binds specifically to the 5'-end of 16S ribosomal RNA. This chain is Small ribosomal subunit protein uS17, found in Hamiltonella defensa subsp. Acyrthosiphon pisum (strain 5AT).